We begin with the raw amino-acid sequence, 396 residues long: S-adenosylmethionine synthase (396 aa).

His16 is a binding site for ATP. A Mg(2+)-binding site is contributed by Asp18. Glu44 contributes to the K(+) binding site. L-methionine-binding residues include Glu57 and Gln100. Positions 100–110 (QSPDIAQGVDD) are flexible loop. Residues 174–176 (DAK), 241–242 (RF), Asp250, 256–257 (RK), Ala273, and Lys277 contribute to the ATP site. Asp250 contacts L-methionine. Lys281 serves as a coordination point for L-methionine.

Belongs to the AdoMet synthase family. As to quaternary structure, homotetramer; dimer of dimers. Mg(2+) serves as cofactor. It depends on K(+) as a cofactor.

The protein resides in the cytoplasm. The catalysed reaction is L-methionine + ATP + H2O = S-adenosyl-L-methionine + phosphate + diphosphate. Its pathway is amino-acid biosynthesis; S-adenosyl-L-methionine biosynthesis; S-adenosyl-L-methionine from L-methionine: step 1/1. Functionally, catalyzes the formation of S-adenosylmethionine (AdoMet) from methionine and ATP. The overall synthetic reaction is composed of two sequential steps, AdoMet formation and the subsequent tripolyphosphate hydrolysis which occurs prior to release of AdoMet from the enzyme. This is S-adenosylmethionine synthase from Pediococcus pentosaceus (strain ATCC 25745 / CCUG 21536 / LMG 10740 / 183-1w).